The primary structure comprises 410 residues: S-adenosylmethionine synthase (410 aa).

An ATP-binding site is contributed by histidine 21. Aspartate 23 lines the Mg(2+) pocket. Glutamate 49 serves as a coordination point for K(+). L-methionine is bound by residues glutamate 62 and glutamine 105. The flexible loop stretch occupies residues 105 to 115 (QSQEIGAGVDQ). A disordered region spans residues 107 to 133 (QEIGAGVDQSHEVRSGENTDADDQAGA). ATP-binding positions include 180–182 (DGK), aspartate 261, 267–268 (RK), alanine 284, and lysine 288. An L-methionine-binding site is contributed by aspartate 261. Lysine 292 contributes to the L-methionine binding site.

The protein belongs to the AdoMet synthase family. As to quaternary structure, homotetramer; dimer of dimers. Requires Mg(2+) as cofactor. K(+) serves as cofactor.

It is found in the cytoplasm. The enzyme catalyses L-methionine + ATP + H2O = S-adenosyl-L-methionine + phosphate + diphosphate. It functions in the pathway amino-acid biosynthesis; S-adenosyl-L-methionine biosynthesis; S-adenosyl-L-methionine from L-methionine: step 1/1. Functionally, catalyzes the formation of S-adenosylmethionine (AdoMet) from methionine and ATP. The overall synthetic reaction is composed of two sequential steps, AdoMet formation and the subsequent tripolyphosphate hydrolysis which occurs prior to release of AdoMet from the enzyme. In Corynebacterium diphtheriae (strain ATCC 700971 / NCTC 13129 / Biotype gravis), this protein is S-adenosylmethionine synthase.